The following is a 474-amino-acid chain: Synaptotagmin-17 (474 aa).

Residues 60 to 112 form a disordered region; the sequence is WLMASRSSDKDGDSVHTASEVPLTPRTNSPDGRRSSSDTSKSTYSLTRRISSL. The segment covering 96-112 has biased composition (low complexity); it reads SDTSKSTYSLTRRISSL. Serine 118 and serine 119 each carry phosphoserine. 2 C2 domains span residues 184–310 and 321–455; these read QLGM…HWWK and ELGE…EQWH.

This sequence belongs to the synaptotagmin family.

It is found in the membrane. Plays a role in dendrite formation by melanocytes. The protein is Synaptotagmin-17 (SYT17) of Pongo abelii (Sumatran orangutan).